The following is a 504-amino-acid chain: Ribonuclease Y (504 aa).

A helical transmembrane segment spans residues 2-22 (TTSIVIGVVLVTVGLTFGWTI). The region spanning 194–279 (TVSTVNLPSE…EIVQKVTQEV (86 aa)) is the KH domain. The HD domain maps to 320–413 (VLYHSKEVAL…VQVADAISAA (94 aa)).

This sequence belongs to the RNase Y family.

It localises to the cell membrane. Endoribonuclease that initiates mRNA decay. The polypeptide is Ribonuclease Y (Treponema pallidum (strain Nichols)).